A 437-amino-acid polypeptide reads, in one-letter code: Enolase 2 (437 aa).

(2R)-2-phosphoglycerate is bound at residue Q162. E204 acts as the Proton donor in catalysis. Positions 251, 297, and 324 each coordinate Mg(2+). Positions 349, 378, 379, and 400 each coordinate (2R)-2-phosphoglycerate. K349 acts as the Proton acceptor in catalysis.

It belongs to the enolase family. The cofactor is Mg(2+).

Its subcellular location is the cytoplasm. It is found in the secreted. The protein localises to the cell surface. The enzyme catalyses (2R)-2-phosphoglycerate = phosphoenolpyruvate + H2O. It participates in carbohydrate degradation; glycolysis; pyruvate from D-glyceraldehyde 3-phosphate: step 4/5. Catalyzes the reversible conversion of 2-phosphoglycerate (2-PG) into phosphoenolpyruvate (PEP). It is essential for the degradation of carbohydrates via glycolysis. This Chlorobaculum tepidum (strain ATCC 49652 / DSM 12025 / NBRC 103806 / TLS) (Chlorobium tepidum) protein is Enolase 2.